The chain runs to 117 residues: Immunoglobulin lambda variable 2 (117 aa).

A signal peptide spans M1 to S19. At Q20 the chain carries Pyrrolidone carboxylic acid. Residues Q20–F117 enclose the Ig-like domain.

The sequence is that of Immunoglobulin lambda variable 2 from Mus musculus (Mouse).